We begin with the raw amino-acid sequence, 365 residues long: Aminomethyltransferase (365 aa).

Belongs to the GcvT family. As to quaternary structure, the glycine cleavage system is composed of four proteins: P, T, L and H.

It carries out the reaction N(6)-[(R)-S(8)-aminomethyldihydrolipoyl]-L-lysyl-[protein] + (6S)-5,6,7,8-tetrahydrofolate = N(6)-[(R)-dihydrolipoyl]-L-lysyl-[protein] + (6R)-5,10-methylene-5,6,7,8-tetrahydrofolate + NH4(+). The glycine cleavage system catalyzes the degradation of glycine. The protein is Aminomethyltransferase of Chlorobaculum parvum (strain DSM 263 / NCIMB 8327) (Chlorobium vibrioforme subsp. thiosulfatophilum).